A 128-amino-acid polypeptide reads, in one-letter code: Putative histidinol dehydrogenase (128 aa).

The disordered stretch occupies residues 21-84 (QRPDIAPRHH…EGQEKASGRR (64 aa)). 2 stretches are compositionally biased toward basic and acidic residues: residues 34–50 (HRAE…RRTA) and 72–81 (QGREGQEKAS).

This sequence belongs to the histidinol dehydrogenase family.

It carries out the reaction L-histidinol + 2 NAD(+) + H2O = L-histidine + 2 NADH + 3 H(+). It functions in the pathway amino-acid biosynthesis; L-histidine biosynthesis; L-histidine from 5-phospho-alpha-D-ribose 1-diphosphate: step 9/9. In terms of biological role, catalyzes the sequential NAD-dependent oxidations of L-histidinol to L-histidinaldehyde and then to L-histidine. This chain is Putative histidinol dehydrogenase (hisD), found in Azospirillum brasilense.